The following is a 311-amino-acid chain: Oxidoreductase NAD-binding domain-containing protein 1 (311 aa).

Positions 1–17 (MACAAVMIPGLLRCSVG) are cleaved as a signal peptide. Residues 50–186 (HMERTASVLR…GGVGINPLLS (137 aa)) enclose the FAD-binding FR-type domain. Position 178-183 (178-183 (GVGINP)) interacts with NAD(+).

The polypeptide is Oxidoreductase NAD-binding domain-containing protein 1 (OXNAD1) (Pongo abelii (Sumatran orangutan)).